Here is a 203-residue protein sequence, read N- to C-terminus: MTDAPDHHPADAAEKRLITETGVAARVAQIVEPSLEGLGFRLVRVRVTGQNGCTVQIMAERPDGTMTVEDCESVSRTISPLLDVDDPIGRAYHLEISSPGIDRPLVRVGDFARWAGHEAKVELTVPLEGRKRFRGIIRAPEGESVRIDLPDAKEGTPASYDLRLRDIGEAHLVLTDALIRESLRRGSAPVEDEEGEGEAPTAH.

The tract at residues 184–203 is disordered; that stretch reads RRGSAPVEDEEGEGEAPTAH.

It belongs to the RimP family.

It is found in the cytoplasm. In terms of biological role, required for maturation of 30S ribosomal subunits. The sequence is that of Ribosome maturation factor RimP from Methylobacterium nodulans (strain LMG 21967 / CNCM I-2342 / ORS 2060).